The sequence spans 248 residues: N-acylneuraminate-9-phosphatase (248 aa).

Aspartate 12 contacts Mg(2+). Residues leucine 13, aspartate 14, threonine 131, asparagine 132, and lysine 164 each contribute to the phosphate site. Residue aspartate 14 coordinates Mg(2+). Mg(2+) is bound at residue aspartate 189.

The protein belongs to the HAD-like hydrolase superfamily. NANP family. Mg(2+) serves as cofactor.

It catalyses the reaction N-acetylneuraminate 9-phosphate + H2O = N-acetylneuraminate + phosphate. It carries out the reaction N-glycoloylneuraminate 9-phosphate + H2O = N-glycoloylneuraminate + phosphate. Its pathway is amino-sugar metabolism; N-acetylneuraminate biosynthesis. With respect to regulation, inhibited by calcium. Inhibited by vanadate, sodium orthovanate and phosphonate. Its function is as follows. Catalyzes the dephosphorylation of N-acylneuraminate 9-phosphate (Neu5Ac-9-P) to sialic acid N-acetylneuraminic acid (Neu5Ac). May also use N-glycoloylneuraminate 9-phosphate as substrate. The chain is N-acylneuraminate-9-phosphatase from Mus musculus (Mouse).